Consider the following 401-residue polypeptide: Lsg locus putative protein 1 (401 aa).

Helical transmembrane passes span 8–28, 36–56, 87–107, 132–152, 162–182, 199–219, 237–257, 282–302, 320–340, 352–372, and 374–394; these read VIYLVGELSSKLVPFLLLPYL, GYGSLSYYQTFLSLFLIVVSL, IIGSIILIGCWIAQSEILFYA, SYAFIQFSLTVTGAVFTVALL, KRILAILLSNLVVWFFSYFLY, ALFYILGFGLPLILHYASFFL, LGLYAMGAQLALVVSIAIQAL, WALFSFLLIPIPALIMWIIPE, FILFLISTTLSIPYLILVNYL, CSVLSTIIYVASLVALTFTEI, and YIPYAGIIGSLSIIPILYFMT.

The protein belongs to the polysaccharide synthase family. HI_0867/HI_1700 subfamily.

It is found in the cell membrane. The protein is Lsg locus putative protein 1 of Haemophilus influenzae (strain ATCC 51907 / DSM 11121 / KW20 / Rd).